We begin with the raw amino-acid sequence, 297 residues long: E3 ubiquitin-protein ligase RNF212B (297 aa).

The RING-type zinc-finger motif lies at 6-40 (CNQCFRKDGAHFFVTSCGHIFCKKCMTLEKCAVCG). A coiled-coil region spans residues 87-136 (LLIAFYKDRITKLEAAVKEAQEMAASQNKELSALRKENGELKKILDILKG). Disordered regions lie at residues 152 to 179 (VGITSPSQSVAPRPSSHHSSQVVSRSSS) and 198 to 269 (RGLH…ESLP). Low complexity predominate over residues 163 to 179 (PRPSSHHSSQVVSRSSS). Polar residues predominate over residues 206–234 (PGDSYTETPSPASTHSLSYRPSSASSGQG).

Homodimer. Post-translationally, autoubiquitinated.

It localises to the chromosome. The enzyme catalyses S-ubiquitinyl-[E2 ubiquitin-conjugating enzyme]-L-cysteine + [acceptor protein]-L-lysine = [E2 ubiquitin-conjugating enzyme]-L-cysteine + N(6)-ubiquitinyl-[acceptor protein]-L-lysine.. It participates in protein modification; protein ubiquitination. Its function is as follows. Ubiquitin E3 ligase that acts as a crucial factor for crossing-over (CO) formation during meiosis. Essential for normal prophase I progression and for ensuring appropriate CO designation in meiosis. Recruits key components of the cross-over machinery either directly ou indirectly, leading to the activation of the MutL-gamma complex. The function of RNF212B in CO designation is dependent on its catalytic activity. This Mus musculus (Mouse) protein is E3 ubiquitin-protein ligase RNF212B (Rnf212b).